A 117-amino-acid polypeptide reads, in one-letter code: Small ribosomal subunit protein uS17 (117 aa).

The segment at 97–117 (AEGLAAAHAGEPETESAATDA) is disordered.

It belongs to the universal ribosomal protein uS17 family. In terms of assembly, part of the 30S ribosomal subunit.

In terms of biological role, one of the primary rRNA binding proteins, it binds specifically to the 5'-end of 16S ribosomal RNA. This Rhodopirellula baltica (strain DSM 10527 / NCIMB 13988 / SH1) protein is Small ribosomal subunit protein uS17.